An 85-amino-acid polypeptide reads, in one-letter code: RNA-binding protein Hfq (85 aa).

The Sm domain maps to 10–70; that stretch reads DIFLNGARKN…ISTINPAKPL (61 aa).

Belongs to the Hfq family. As to quaternary structure, homohexamer.

Functionally, RNA chaperone that binds small regulatory RNA (sRNAs) and mRNAs to facilitate mRNA translational regulation in response to envelope stress, environmental stress and changes in metabolite concentrations. Also binds with high specificity to tRNAs. The sequence is that of RNA-binding protein Hfq from Clostridium botulinum (strain 657 / Type Ba4).